We begin with the raw amino-acid sequence, 209 residues long: Ribosomal RNA large subunit methyltransferase E (209 aa).

S-adenosyl-L-methionine is bound by residues Gly-63, Trp-65, Asp-83, Asp-99, and Asp-124. The Proton acceptor role is filled by Lys-164.

The protein belongs to the class I-like SAM-binding methyltransferase superfamily. RNA methyltransferase RlmE family.

The protein resides in the cytoplasm. The enzyme catalyses uridine(2552) in 23S rRNA + S-adenosyl-L-methionine = 2'-O-methyluridine(2552) in 23S rRNA + S-adenosyl-L-homocysteine + H(+). Specifically methylates the uridine in position 2552 of 23S rRNA at the 2'-O position of the ribose in the fully assembled 50S ribosomal subunit. The protein is Ribosomal RNA large subunit methyltransferase E of Pectobacterium atrosepticum (strain SCRI 1043 / ATCC BAA-672) (Erwinia carotovora subsp. atroseptica).